The primary structure comprises 551 residues: Palatinase (551 aa).

Residue aspartate 201 is the Nucleophile of the active site. Glutamate 243 acts as the Proton donor in catalysis.

It belongs to the glycosyl hydrolase 13 family.

The catalysed reaction is 6-O-alpha-D-glucopyranosyl-D-fructose + H2O = alpha-D-glucose + D-fructose. Its pathway is glycan degradation; palatinose degradation. Functionally, catalyzes the hydrolysis of palatinose. Shows a strict specificity toward palatinose, and cannot release glucose from the disaccharides sucrose, maltose, trehalose and melibiose. Involved in the degradation of palatinose, a sucrose isomer that is formed as a reserve material under conditions of excess carbon availability, sequestered in a form unavailable to competitors such as fungi or the host plant, and whose consumption appears to be postponed until the preferentially metabolized carbon source (e.g. sucrose) is depleted. The chain is Palatinase from Erwinia rhapontici (Pectobacterium rhapontici).